Consider the following 605-residue polypeptide: Glucose oxidase (605 aa).

The signal sequence occupies residues 1–16 (MKTILSSSLVVSMAAA). 2 residues coordinate FAD: leucine 51 and threonine 52. Residue asparagine 65 is glycosylated (N-linked (GlcNAc...) asparagine). Glutamate 72 serves as a coordination point for FAD. A glycan (N-linked (GlcNAc...) asparagine) is linked at asparagine 111. Residues serine 125, asparagine 129, glycine 130, and threonine 132 each contribute to the FAD site. A disulfide bond links cysteine 186 and cysteine 228. A glycan (N-linked (GlcNAc...) asparagine) is linked at asparagine 190. Valine 272 provides a ligand contact to FAD. Residues asparagine 280, asparagine 377, asparagine 410, and asparagine 495 are each glycosylated (N-linked (GlcNAc...) asparagine). The active-site Proton acceptor is histidine 538. Arginine 559 and valine 560 together coordinate O2. FAD-binding residues include glycine 571 and methionine 583.

It belongs to the GMC oxidoreductase family. In terms of assembly, homodimer. Requires FAD as cofactor.

Its subcellular location is the secreted. It localises to the cell wall. The protein localises to the cytoplasm. It is found in the extracellular space. The protein resides in the extracellular matrix. It catalyses the reaction beta-D-glucose + O2 = D-glucono-1,5-lactone + H2O2. Its function is as follows. Glucose oxidase catalyzes the oxidation of beta-D-glucose to D-glucono-delta-lactone and hydrogen peroxide in the presence of molecular oxygen. Acts as a critical factor modulating pathogenicity by controlling transcription of genes important for fungal secondary metabolism and infection such as those coding for enzymes involved in degradation of the host cell wall. The protein is Glucose oxidase of Aspergillus carbonarius (strain ITEM 5010).